The chain runs to 326 residues: Olfactory receptor 10X1 (326 aa).

Over 1-41 (MVLNVYCCFFQISDIQTMKINQTILKEFILVGFSVYPHVQT) the chain is Extracellular. N-linked (GlcNAc...) asparagine glycosylation is present at N21. Residues 42–62 (FLFVVFFCLYLLTLAGNLIIM) form a helical membrane-spanning segment. The Cytoplasmic segment spans residues 63-70 (GLTWVDRS). Residues 71–91 (LHTPMYLFLSALSFSETCYTL) traverse the membrane as a helical segment. Residues 92 to 115 (TIVPKMLEDLLAKDRSISVTGCSL) lie on the Extracellular side of the membrane. C113 and C205 are disulfide-bonded. A helical membrane pass occupies residues 116–136 (QMCFFLGLGGTNCIILTLMGY). Topologically, residues 137-155 (DRFLAICNPLRYPLLMTNI) are cytoplasmic. Residues 156–176 (VCGQLVASACTAGFFISLTET) traverse the membrane as a helical segment. Residues 177–213 (ALIFRDSFCRPNLVKHFFCHMLAVIRLSCIDSNHTEF) are Extracellular-facing. Residue N209 is glycosylated (N-linked (GlcNAc...) asparagine). A helical transmembrane segment spans residues 214 to 233 (IITLISVSGLLGTLLLIILT). Topologically, residues 234–253 (DVFIISTVLRIPSAEGKQKA) are cytoplasmic. Residues 254–274 (FTTCASHLTVVIIHFGFASIV) traverse the membrane as a helical segment. The Extracellular segment spans residues 275–284 (YLKPEASGDD). A helical membrane pass occupies residues 285-305 (TLIAVPYTVITPFLSPIIFSL). Topologically, residues 306–326 (RNKDMKNAFRRMMGNTVALKK) are cytoplasmic.

It belongs to the G-protein coupled receptor 1 family.

The protein localises to the cell membrane. In terms of biological role, odorant receptor. This is Olfactory receptor 10X1 (OR10X1) from Homo sapiens (Human).